We begin with the raw amino-acid sequence, 243 residues long: Probable transcriptional regulatory protein Tbd_2215 (243 aa).

It belongs to the TACO1 family.

The protein resides in the cytoplasm. The sequence is that of Probable transcriptional regulatory protein Tbd_2215 from Thiobacillus denitrificans (strain ATCC 25259 / T1).